Reading from the N-terminus, the 569-residue chain is Cysteine--tRNA ligase CPS1 homolog, chloroplastic/mitochondrial (569 aa).

A chloroplast and mitochondrion-targeting transit peptide spans 1–42 (MAAARRAAGLLPLLLSSPSRARLPHRQALALTPPLLRPHRLY). C99 contributes to the Zn(2+) binding site. Positions 101-111 (VTPYDDSHIGH) match the 'HIGH' region motif. 3 residues coordinate Zn(2+): C279, H304, and E308. Residues 336 to 340 (KMSKS) carry the 'KMSKS' region motif. Position 339 (K339) interacts with ATP.

It belongs to the class-I aminoacyl-tRNA synthetase family. It depends on Zn(2+) as a cofactor.

Its subcellular location is the plastid. It localises to the chloroplast. The protein localises to the mitochondrion. The enzyme catalyses tRNA(Cys) + L-cysteine + ATP = L-cysteinyl-tRNA(Cys) + AMP + diphosphate. Its function is as follows. Nuclear genome-encoded factor required for normal assembly of chloroplast polysomes. The sequence is that of Cysteine--tRNA ligase CPS1 homolog, chloroplastic/mitochondrial from Oryza sativa subsp. japonica (Rice).